The following is a 227-amino-acid chain: Uracil-DNA glycosylase (227 aa).

Catalysis depends on D64, which acts as the Proton acceptor.

Belongs to the uracil-DNA glycosylase (UDG) superfamily. UNG family.

It localises to the cytoplasm. It carries out the reaction Hydrolyzes single-stranded DNA or mismatched double-stranded DNA and polynucleotides, releasing free uracil.. In terms of biological role, excises uracil residues from the DNA which can arise as a result of misincorporation of dUMP residues by DNA polymerase or due to deamination of cytosine. This chain is Uracil-DNA glycosylase, found in Erwinia tasmaniensis (strain DSM 17950 / CFBP 7177 / CIP 109463 / NCPPB 4357 / Et1/99).